A 513-amino-acid chain; its full sequence is Cytochrome P450 1A2 (513 aa).

An O-linked (GlcNAc) serine glycan is attached at Ser68. Phe225 serves as a coordination point for substrate. Cys456 contributes to the heme binding site.

This sequence belongs to the cytochrome P450 family. In terms of assembly, interacts with PGRMC1; the interaction requires PGRMC1 homodimerization. Heme is required as a cofactor.

It is found in the endoplasmic reticulum membrane. The protein localises to the microsome membrane. The enzyme catalyses an organic molecule + reduced [NADPH--hemoprotein reductase] + O2 = an alcohol + oxidized [NADPH--hemoprotein reductase] + H2O + H(+). It carries out the reaction 17beta-estradiol + reduced [NADPH--hemoprotein reductase] + O2 = 2-hydroxy-17beta-estradiol + oxidized [NADPH--hemoprotein reductase] + H2O + H(+). The catalysed reaction is 17beta-estradiol + reduced [NADPH--hemoprotein reductase] + O2 = 4-hydroxy-17beta-estradiol + oxidized [NADPH--hemoprotein reductase] + H2O + H(+). It catalyses the reaction estrone + reduced [NADPH--hemoprotein reductase] + O2 = 2-hydroxyestrone + oxidized [NADPH--hemoprotein reductase] + H2O + H(+). The enzyme catalyses estrone + reduced [NADPH--hemoprotein reductase] + O2 = 4-hydroxyestrone + oxidized [NADPH--hemoprotein reductase] + H2O + H(+). It carries out the reaction cholesterol + reduced [NADPH--hemoprotein reductase] + O2 = 25-hydroxycholesterol + oxidized [NADPH--hemoprotein reductase] + H2O + H(+). The catalysed reaction is all-trans-retinol + reduced [NADPH--hemoprotein reductase] + O2 = all-trans-retinal + oxidized [NADPH--hemoprotein reductase] + 2 H2O + H(+). It catalyses the reaction all-trans-retinal + reduced [NADPH--hemoprotein reductase] + O2 = all-trans-retinoate + oxidized [NADPH--hemoprotein reductase] + H2O + 2 H(+). The enzyme catalyses (5Z,8Z,11Z,14Z)-eicosatetraenoate + reduced [NADPH--hemoprotein reductase] + O2 = (14R,15S)-epoxy-(5Z,8Z,11Z)-eicosatrienoate + oxidized [NADPH--hemoprotein reductase] + H2O + H(+). It carries out the reaction (5Z,8Z,11Z,14Z)-eicosatetraenoate + reduced [NADPH--hemoprotein reductase] + O2 = (14S,15R)-epoxy-(5Z,8Z,11Z)-eicosatrienoate + oxidized [NADPH--hemoprotein reductase] + H2O + H(+). The catalysed reaction is (5Z,8Z,11Z,14Z,17Z)-eicosapentaenoate + reduced [NADPH--hemoprotein reductase] + O2 = (17R,18S)-epoxy-(5Z,8Z,11Z,14Z)-eicosatetraenoate + oxidized [NADPH--hemoprotein reductase] + H2O + H(+). It catalyses the reaction (4Z,7Z,10Z,13Z,16Z,19Z)-docosahexaenoate + reduced [NADPH--hemoprotein reductase] + O2 = (19R,20S)-epoxy-(4Z,7Z,10Z,13Z,16Z)-docosapentaenoate + oxidized [NADPH--hemoprotein reductase] + H2O + H(+). The enzyme catalyses (5S)-hydroperoxy-(6E,8Z,11Z,14Z)-eicosatetraenoate = 5-oxo-(6E,8Z,11Z,14Z)-eicosatetraenoate + H2O. It carries out the reaction (12S)-hydroperoxy-(5Z,8Z,10E,14Z)-eicosatetraenoate = 12-oxo-(5Z,8Z,10E,14Z)-eicosatetraenoate + H2O. The catalysed reaction is (15S)-hydroperoxy-(5Z,8Z,11Z,13E)-eicosatetraenoate = 15-oxo-(5Z,8Z,11Z,13E)-eicosatetraenoate + H2O. It catalyses the reaction (13S)-hydroperoxy-(9Z,11E)-octadecadienoate = 13-oxo-(9Z,11E)-octadecadienoate + H2O. The enzyme catalyses (5Z,8Z,11Z,14Z)-eicosatetraenoate + reduced [NADPH--hemoprotein reductase] + O2 = 13-hydroxy-(5Z,8Z,11Z,14Z)-eicosatetraenoate + oxidized [NADPH--hemoprotein reductase] + H2O + H(+). It carries out the reaction (5Z,8Z,11Z,14Z)-eicosatetraenoate + reduced [NADPH--hemoprotein reductase] + O2 = 19-hydroxy-(5Z,8Z,11Z,14Z)-eicosatetraenoate + oxidized [NADPH--hemoprotein reductase] + H2O + H(+). The catalysed reaction is (9Z,12Z)-octadecadienoate + reduced [NADPH--hemoprotein reductase] + O2 = 11-hydroxy-(9Z,12Z)-octadecadienoate + oxidized [NADPH--hemoprotein reductase] + H2O + H(+). The protein operates within cofactor metabolism; retinol metabolism. It functions in the pathway steroid metabolism; cholesterol metabolism. It participates in lipid metabolism; arachidonate metabolism. In terms of biological role, a cytochrome P450 monooxygenase involved in the metabolism of various endogenous substrates, including fatty acids, steroid hormones and vitamins. Mechanistically, uses molecular oxygen inserting one oxygen atom into a substrate, and reducing the second into a water molecule, with two electrons provided by NADPH via cytochrome P450 reductase (NADPH--hemoprotein reductase). Catalyzes the hydroxylation of carbon-hydrogen bonds. Exhibits high catalytic activity for the formation of hydroxyestrogens from estrone (E1) and 17beta-estradiol (E2), namely 2-hydroxy E1 and E2. Metabolizes cholesterol toward 25-hydroxycholesterol, a physiological regulator of cellular cholesterol homeostasis. May act as a major enzyme for all-trans retinoic acid biosynthesis in the liver. Catalyzes two successive oxidative transformation of all-trans retinol to all-trans retinal and then to the active form all-trans retinoic acid. Primarily catalyzes stereoselective epoxidation of the last double bond of polyunsaturated fatty acids (PUFA), displaying a strong preference for the (R,S) stereoisomer. Catalyzes bisallylic hydroxylation and omega-1 hydroxylation of PUFA. May also participate in eicosanoids metabolism by converting hydroperoxide species into oxo metabolites (lipoxygenase-like reaction, NADPH-independent). Plays a role in the oxidative metabolism of xenobiotics. Catalyzes the N-hydroxylation of heterocyclic amines and the O-deethylation of phenacetin. Metabolizes caffeine via N3-demethylation. This Mus musculus (Mouse) protein is Cytochrome P450 1A2 (Cyp1a2).